A 66-amino-acid chain; its full sequence is Brevinin-1CDYd (66 aa).

An N-terminal signal peptide occupies residues methionine 1–cysteine 22. Residues glutamate 23–glutamate 44 constitute a propeptide that is removed on maturation. A disulfide bridge links cysteine 60 with cysteine 66.

This sequence belongs to the frog skin active peptide (FSAP) family. Brevinin subfamily. As to expression, expressed by the skin glands.

It localises to the secreted. Functionally, antimicrobial peptide. This Rana dybowskii (Dybovsky's frog) protein is Brevinin-1CDYd.